The following is a 391-amino-acid chain: Aspartate carbamoyltransferase 3, chloroplastic (391 aa).

The transit peptide at 1–69 directs the protein to the chloroplast; the sequence is MTASSSLFSC…SKCDKMIKTR (69 aa). Residues arginine 137 and threonine 138 each coordinate carbamoyl phosphate. Residues arginine 137 and threonine 138 each coordinate UMP. L-aspartate is bound at residue lysine 167. Residues arginine 188, histidine 216, and glutamine 219 each coordinate carbamoyl phosphate. Residues arginine 188 and histidine 216 each coordinate UMP. Residues arginine 249 and arginine 311 each contribute to the UMP site. The L-aspartate site is built by arginine 249 and arginine 311. 2 residues coordinate carbamoyl phosphate: leucine 351 and proline 352.

Belongs to the aspartate/ornithine carbamoyltransferase superfamily. ATCase family. As to quaternary structure, homotrimer.

It is found in the plastid. It localises to the chloroplast. The catalysed reaction is carbamoyl phosphate + L-aspartate = N-carbamoyl-L-aspartate + phosphate + H(+). It functions in the pathway pyrimidine metabolism; UMP biosynthesis via de novo pathway; (S)-dihydroorotate from bicarbonate: step 2/3. Its activity is regulated as follows. Feedback inhibited by UMP. Catalyzes the condensation of carbamoyl phosphate and aspartate to form carbamoyl aspartate and inorganic phosphate, the committed step in the de novo pyrimidine nucleotide biosynthesis pathway. The protein is Aspartate carbamoyltransferase 3, chloroplastic (PYRB3) of Pisum sativum (Garden pea).